Here is a 200-residue protein sequence, read N- to C-terminus: 2-phospho-L-lactate guanylyltransferase (200 aa).

The protein belongs to the CofC family. In terms of assembly, homodimer.

It carries out the reaction (2S)-2-phospholactate + GTP + H(+) = (2S)-lactyl-2-diphospho-5'-guanosine + diphosphate. The protein operates within cofactor biosynthesis; coenzyme F420 biosynthesis. Guanylyltransferase that catalyzes the activation of (2S)-2-phospholactate (2-PL) as (2S)-lactyl-2-diphospho-5'-guanosine, via the condensation of 2-PL with GTP. It is involved in the biosynthesis of coenzyme F420, a hydride carrier cofactor. The protein is 2-phospho-L-lactate guanylyltransferase of Ferroglobus placidus (strain DSM 10642 / AEDII12DO).